A 132-amino-acid chain; its full sequence is DNA-directed RNA polymerase subunit Rpo8 (132 aa).

The protein belongs to the archaeal Rpo8 RNA polymerase subunit family. Part of the 13-subunit RNA polymerase complex.

The protein localises to the cytoplasm. It carries out the reaction RNA(n) + a ribonucleoside 5'-triphosphate = RNA(n+1) + diphosphate. Functionally, DNA-dependent RNA polymerase (RNAP) catalyzes the transcription of DNA into RNA using the four ribonucleoside triphosphates as substrates. In Saccharolobus solfataricus (strain ATCC 35092 / DSM 1617 / JCM 11322 / P2) (Sulfolobus solfataricus), this protein is DNA-directed RNA polymerase subunit Rpo8.